The primary structure comprises 1029 residues: Tyrosine-protein kinase-like otk (1029 aa).

Residues 1-18 form the signal peptide; the sequence is MISIYGLVMALMMASVLA. Topologically, residues 19–577 are extracellular; sequence SSSRFQRVPQ…GGDGFLVTRA (559 aa). Ig-like C2-type domains lie at 21–104, 105–195, 247–361, 364–459, and 464–554; these read SRFQ…REAS, PPAK…RVMS, PEDL…APIS, PGIL…VAIN, and PKFS…VQLV. N-linked (GlcNAc...) asparagine glycosylation is present at asparagine 35. Intrachain disulfides connect cysteine 42/cysteine 91, cysteine 133/cysteine 184, cysteine 272/cysteine 350, and cysteine 395/cysteine 443. N-linked (GlcNAc...) asparagine glycans are attached at residues asparagine 332, asparagine 413, asparagine 425, asparagine 440, asparagine 453, asparagine 508, and asparagine 520. Cysteine 486 and cysteine 538 are disulfide-bonded. The helical transmembrane segment at 578 to 598 threads the bilayer; sequence VLITMTVALAYIVLVVGLMLW. Over 599-1029 the chain is Cytoplasmic; that stretch reads CRYRRQARKA…LSKAMQIAEK (431 aa). 2 disordered regions span residues 613 to 675 and 714 to 756; these read LSTK…KKSA and SPSD…KTSM. The segment covering 651 to 669 has biased composition (polar residues); it reads KSSGDAQKSDDTACSQQSR. Serine 674 is subject to Phosphoserine. The Protein kinase; inactive domain occupies 688–1024; that stretch reads LSELIQIGRG…QLGAALSKAM (337 aa). Over residues 716-727 the composition is skewed to basic and acidic residues; it reads SDKDADTEKQHS.

It belongs to the protein kinase superfamily. Tyr protein kinase family. Insulin receptor subfamily. Interacts with plexA; component of a receptor complex that mediates the repulsive signaling in response to Semaphorin ligands.

It localises to the cell membrane. Functionally, acts as a calcium-dependent, homophilic cell adhesion molecule that regulates neural recognition during the development of the nervous system. Component of the repulsive Plexin signaling response to regulate motor axon guidance at the embryonic stage. Also component of a receptor complex that is required in the adult visual system to innervate the lamina layer; specific targeting of R1-R6 axons. This Drosophila sechellia (Fruit fly) protein is Tyrosine-protein kinase-like otk.